We begin with the raw amino-acid sequence, 156 residues long: Small ribosomal subunit protein uS7 (156 aa).

This sequence belongs to the universal ribosomal protein uS7 family. In terms of assembly, part of the 30S ribosomal subunit. Contacts proteins S9 and S11.

In terms of biological role, one of the primary rRNA binding proteins, it binds directly to 16S rRNA where it nucleates assembly of the head domain of the 30S subunit. Is located at the subunit interface close to the decoding center, probably blocks exit of the E-site tRNA. In Heliobacterium modesticaldum (strain ATCC 51547 / Ice1), this protein is Small ribosomal subunit protein uS7.